The sequence spans 203 residues: Large ribosomal subunit protein bL25 (203 aa).

The protein belongs to the bacterial ribosomal protein bL25 family. CTC subfamily. In terms of assembly, part of the 50S ribosomal subunit; part of the 5S rRNA/L5/L18/L25 subcomplex. Contacts the 5S rRNA. Binds to the 5S rRNA independently of L5 and L18.

In terms of biological role, this is one of the proteins that binds to the 5S RNA in the ribosome where it forms part of the central protuberance. This chain is Large ribosomal subunit protein bL25, found in Rickettsia prowazekii (strain Madrid E).